We begin with the raw amino-acid sequence, 487 residues long: Serine/threonine-protein kinase BSK8 (487 aa).

Glycine 2 carries N-myristoyl glycine lipidation. The residue at position 20 (serine 20) is a Phosphoserine. Residues 59-325 enclose the Protein kinase domain; that stretch reads ENIVSEHGER…DLEIASHQLL (267 aa). Residues 65 to 73, asparagine 71, lysine 87, and 133 to 135 contribute to the ATP site; these read HGERAPNVV and EFM. Aspartate 181 (proton acceptor) is an active-site residue. Residues 185 to 186 and asparagine 205 each bind ATP; that span reads YR. Phosphoserine is present on serine 213.

The protein belongs to the protein kinase superfamily. Ser/Thr protein kinase family. As to quaternary structure, interacts with ASK7/BIN2, BSK1, BSK5, BSK6 and BSK11. Interacts with BSL2. In terms of processing, phosphorylated by BRI1, ASK7/BIN2 and ASK9/BIL2.

It localises to the cell membrane. It catalyses the reaction L-seryl-[protein] + ATP = O-phospho-L-seryl-[protein] + ADP + H(+). It carries out the reaction L-threonyl-[protein] + ATP = O-phospho-L-threonyl-[protein] + ADP + H(+). Functionally, probable serine/threonine kinase that acts as a positive regulator of brassinosteroid (BR) signaling downstream of the receptor kinase BRI1. Functions redundantly with BSK3, BSK4, BSK6 and BSK7. Involved in the regulation of sucrose-phosphate synthase 1 (SPS1) in the context of sucrose resuply after starvation. Activates BSL2, a phosphatase that may dephosphorylate SPS1, leading to the activation of SPS1. The chain is Serine/threonine-protein kinase BSK8 from Arabidopsis thaliana (Mouse-ear cress).